The following is a 201-amino-acid chain: Pyridoxine/pyridoxamine 5'-phosphate oxidase (201 aa).

Residues 49–54, 64–65, K71, and Q93 contribute to the FMN site; these read RMVLLK and YT. K54 contributes to the substrate binding site. Substrate is bound by residues Y111, R115, and S119. Residues 128–129 and W172 each bind FMN; that span reads QS. 178-180 serves as a coordination point for substrate; it reads RLH. An FMN-binding site is contributed by R182.

This sequence belongs to the pyridoxamine 5'-phosphate oxidase family. Homodimer. FMN is required as a cofactor.

The catalysed reaction is pyridoxamine 5'-phosphate + O2 + H2O = pyridoxal 5'-phosphate + H2O2 + NH4(+). It catalyses the reaction pyridoxine 5'-phosphate + O2 = pyridoxal 5'-phosphate + H2O2. The protein operates within cofactor metabolism; pyridoxal 5'-phosphate salvage; pyridoxal 5'-phosphate from pyridoxamine 5'-phosphate: step 1/1. It participates in cofactor metabolism; pyridoxal 5'-phosphate salvage; pyridoxal 5'-phosphate from pyridoxine 5'-phosphate: step 1/1. In terms of biological role, catalyzes the oxidation of either pyridoxine 5'-phosphate (PNP) or pyridoxamine 5'-phosphate (PMP) into pyridoxal 5'-phosphate (PLP). The polypeptide is Pyridoxine/pyridoxamine 5'-phosphate oxidase (Ruegeria sp. (strain TM1040) (Silicibacter sp.)).